A 753-amino-acid polypeptide reads, in one-letter code: Neuroendocrine convertase 1 (753 aa).

The N-terminal stretch at 1 to 27 is a signal peptide; it reads MGRRAWTLQCTAFSLFCAWCAMNSVKA. A propeptide spanning residues 28-110 is cleaved from the precursor; the sequence is KKQFVNEWAA…QQYEKERSKR (83 aa). One can recognise a Peptidase S8 domain in the interval 129–450; that stretch reads QWYLQDTRMT…FGLLNAKALV (322 aa). Residue D167 is the Charge relay system of the active site. N173 carries N-linked (GlcNAc...) asparagine glycosylation. The active-site Charge relay system is the H208. 2 disulfides stabilise this stretch: C225/C374 and C317/C347. The active-site Charge relay system is the S382. N401 is a glycosylation site (N-linked (GlcNAc...) asparagine). Residues 460 to 597 form the P/Homo B domain; sequence SVPEKKECVV…KLILHGTSSQ (138 aa). A disulfide bridge links C467 with C494. 2 disordered regions span residues 617-657 and 676-695; these read RRGV…RRDE and SKNSPSKQSPKKPPSAKPNI.

It belongs to the peptidase S8 family. Furin subfamily. Requires Ca(2+) as cofactor.

The protein resides in the cytoplasmic vesicle. The protein localises to the secretory vesicle. The enzyme catalyses Release of protein hormones, neuropeptides and renin from their precursors, generally by hydrolysis of -Lys-Arg-|- bonds.. Its function is as follows. Involved in the processing of hormone and other protein precursors at sites comprised of pairs of basic amino acid residues. Substrates include POMC, renin, enkephalin, dynorphin, somatostatin, insulin and AGRP. This is Neuroendocrine convertase 1 (PCSK1) from Bos taurus (Bovine).